Consider the following 115-residue polypeptide: Mitochondrial zinc maintenance protein 1, mitochondrial (115 aa).

The transit peptide at 1 to 23 (MTTSTAAAAKSAYRQLLRSTRVV) directs the protein to the mitochondrion.

It belongs to the complex I LYR family. MZM1 subfamily. As to quaternary structure, interacts with RIP1.

The protein resides in the mitochondrion matrix. Assembly factor required for Rieske Fe-S protein RIP1 incorporation into the cytochrome b-c1 (CIII) complex. Functions as a chaperone, binding to this subunit within the mitochondrial matrix and stabilizing it prior to its translocation and insertion into the late CIII dimeric intermediate within the mitochondrial inner membrane. Modulates the mitochondrial matrix zinc pool. This is Mitochondrial zinc maintenance protein 1, mitochondrial (MZM1) from Penicillium rubens (strain ATCC 28089 / DSM 1075 / NRRL 1951 / Wisconsin 54-1255) (Penicillium chrysogenum).